Here is a 370-residue protein sequence, read N- to C-terminus: Metallophosphoesterase 1 homolog (370 aa).

The helical transmembrane segment at 7 to 27 (CFVIVLCALIFCEYVADFVVL) threads the bilayer. Asp-52, Asp-94, Asn-132, His-225, His-275, and His-277 together coordinate a divalent metal cation. A helical transmembrane segment spans residues 328–348 (FVFNSYLSAGILCLIVIGFQL).

The protein belongs to the metallophosphoesterase superfamily. MPPE1 family. It depends on Mn(2+) as a cofactor.

The protein resides in the membrane. Metallophosphoesterase. This is Metallophosphoesterase 1 homolog (PGAP5) from Drosophila melanogaster (Fruit fly).